A 287-amino-acid chain; its full sequence is Oxaloacetate decarboxylase (287 aa).

Ser-50 contacts substrate. Asp-88 is a Mg(2+) binding site. Substrate contacts are provided by Arg-159 and His-235.

This sequence belongs to the isocitrate lyase/PEP mutase superfamily. Oxaloacetate decarboxylase family. Homotetramer; dimer of dimers. Mg(2+) serves as cofactor.

It carries out the reaction oxaloacetate + H(+) = pyruvate + CO2. Its function is as follows. Catalyzes the decarboxylation of oxaloacetate into pyruvate. Seems to play a role in maintaining cellular concentrations of bicarbonate and pyruvate. In Pseudomonas paraeruginosa (strain DSM 24068 / PA7) (Pseudomonas aeruginosa (strain PA7)), this protein is Oxaloacetate decarboxylase.